Reading from the N-terminus, the 170-residue chain is Probable inosine/xanthosine triphosphatase (170 aa).

Residue 7-12 (TTNPVK) participates in substrate binding. Aspartate 37 serves as a coordination point for Mg(2+).

It belongs to the YjjX NTPase family. Homodimer. Mg(2+) serves as cofactor. Mn(2+) is required as a cofactor.

It carries out the reaction XTP + H2O = XDP + phosphate + H(+). It catalyses the reaction ITP + H2O = IDP + phosphate + H(+). Its function is as follows. Phosphatase that hydrolyzes non-canonical purine nucleotides such as XTP and ITP to their respective diphosphate derivatives. Probably excludes non-canonical purines from DNA/RNA precursor pool, thus preventing their incorporation into DNA/RNA and avoiding chromosomal lesions. The protein is Probable inosine/xanthosine triphosphatase of Methanopyrus kandleri (strain AV19 / DSM 6324 / JCM 9639 / NBRC 100938).